The primary structure comprises 391 residues: cAMP-dependent protein kinase regulatory subunit (391 aa).

The segment at 1–84 is disordered; it reads MFKSPFGANA…PPNPESYPAQ (84 aa). Residues 1–131 are dimerization and phosphorylation; sequence MFKSPFGANA…RLKTAIAGNF (131 aa). The segment covering 38-55 has biased composition (polar residues); the sequence is TVTSPTSPNFGMNAQSMF. Position 92 is a phosphoserine (Ser92). Residues 132 to 261, Glu210, Arg219, 264 to 381, Glu331, and Arg340 each bind 3',5'-cyclic AMP; these read LFSH…FLRE and LLQT…DIKT.

The protein belongs to the cAMP-dependent kinase regulatory chain family. As to quaternary structure, tetramer, composed of 2 regulatory (R) and 2 catalytic (C) subunits. In the presence of cAMP it dissociates into 2 active monomeric C subunits and an R dimer.

This Colletotrichum orbiculare (strain 104-T / ATCC 96160 / CBS 514.97 / LARS 414 / MAFF 240422) (Cucumber anthracnose fungus) protein is cAMP-dependent protein kinase regulatory subunit (PKAR).